An 86-amino-acid chain; its full sequence is uncharacterized protein (86 aa).

A signal peptide spans 1–22; it reads MKTINTVVAAMALSTLSFGVFA.

Belongs to the BhsA/McbA family.

Its subcellular location is the periplasm. This is an uncharacterized protein from Escherichia coli O6:H1 (strain CFT073 / ATCC 700928 / UPEC).